Consider the following 300-residue polypeptide: Porphobilinogen deaminase (300 aa).

S-(dipyrrolylmethanemethyl)cysteine is present on Cys239.

The protein belongs to the HMBS family. Monomer. The cofactor is dipyrromethane.

The catalysed reaction is 4 porphobilinogen + H2O = hydroxymethylbilane + 4 NH4(+). The protein operates within porphyrin-containing compound metabolism; protoporphyrin-IX biosynthesis; coproporphyrinogen-III from 5-aminolevulinate: step 2/4. Functionally, tetrapolymerization of the monopyrrole PBG into the hydroxymethylbilane pre-uroporphyrinogen in several discrete steps. The sequence is that of Porphobilinogen deaminase from Francisella tularensis subsp. holarctica (strain FTNF002-00 / FTA).